Consider the following 182-residue polypeptide: Bifunctional protein PyrR (182 aa).

The short motif at 99 to 111 (IVLVDDVLFTGRT) is the PRPP-binding element.

The protein belongs to the purine/pyrimidine phosphoribosyltransferase family. PyrR subfamily. Homodimer and homohexamer; in equilibrium.

The catalysed reaction is UMP + diphosphate = 5-phospho-alpha-D-ribose 1-diphosphate + uracil. Functionally, regulates transcriptional attenuation of the pyrimidine nucleotide (pyr) operon by binding in a uridine-dependent manner to specific sites on pyr mRNA. This disrupts an antiterminator hairpin in the RNA and favors formation of a downstream transcription terminator, leading to a reduced expression of downstream genes. Also displays a weak uracil phosphoribosyltransferase activity which is not physiologically significant. The sequence is that of Bifunctional protein PyrR from Caldicellulosiruptor bescii (strain ATCC BAA-1888 / DSM 6725 / KCTC 15123 / Z-1320) (Anaerocellum thermophilum).